Consider the following 361-residue polypeptide: 3-dehydroquinate synthase (361 aa).

NAD(+)-binding positions include 104–108 (GVIGD), 128–129 (TT), lysine 140, and lysine 149. The Zn(2+) site is built by glutamate 182, histidine 245, and histidine 262.

The protein belongs to the sugar phosphate cyclases superfamily. Dehydroquinate synthase family. The cofactor is NAD(+). Requires Co(2+) as cofactor. It depends on Zn(2+) as a cofactor.

It localises to the cytoplasm. It carries out the reaction 7-phospho-2-dehydro-3-deoxy-D-arabino-heptonate = 3-dehydroquinate + phosphate. It functions in the pathway metabolic intermediate biosynthesis; chorismate biosynthesis; chorismate from D-erythrose 4-phosphate and phosphoenolpyruvate: step 2/7. Its function is as follows. Catalyzes the conversion of 3-deoxy-D-arabino-heptulosonate 7-phosphate (DAHP) to dehydroquinate (DHQ). The polypeptide is 3-dehydroquinate synthase (Halalkalibacterium halodurans (strain ATCC BAA-125 / DSM 18197 / FERM 7344 / JCM 9153 / C-125) (Bacillus halodurans)).